A 123-amino-acid chain; its full sequence is Sperm-associated antigen 11A (123 aa).

The first 25 residues, 1–25 (MRQRLLPSVTSLLLVALLFPGSSQA), serve as a signal peptide directing secretion. Asparagine 29 carries an N-linked (GlcNAc...) asparagine glycan.

This sequence belongs to the SPAG11 family.

It localises to the secreted. In terms of biological role, has antimicrobial activity against E.coli. Plays a role in the defense response in the male reproductive tract, contributing to sperm maturation, storage and protection. In Homo sapiens (Human), this protein is Sperm-associated antigen 11A.